Reading from the N-terminus, the 34-residue chain is Photosystem II reaction center protein T (34 aa).

The helical transmembrane segment at 3-23 threads the bilayer; it reads ALVYTFLLVGTLGIIFFAIFF.

This sequence belongs to the PsbT family. PSII is composed of 1 copy each of membrane proteins PsbA, PsbB, PsbC, PsbD, PsbE, PsbF, PsbH, PsbI, PsbJ, PsbK, PsbL, PsbM, PsbT, PsbY, PsbZ, Psb30/Ycf12, at least 3 peripheral proteins of the oxygen-evolving complex and a large number of cofactors. It forms dimeric complexes.

The protein resides in the plastid. Its subcellular location is the chloroplast thylakoid membrane. In terms of biological role, found at the monomer-monomer interface of the photosystem II (PS II) dimer, plays a role in assembly and dimerization of PSII. PSII is a light-driven water plastoquinone oxidoreductase, using light energy to abstract electrons from H(2)O, generating a proton gradient subsequently used for ATP formation. This is Photosystem II reaction center protein T from Klebsormidium bilatum (Filamentous green alga).